The sequence spans 204 residues: Protein GrpE (204 aa).

The interval 1-42 is disordered; that stretch reads MTDETAKNGPDAAADAQIEPQVQEETNSTAEDAGQDNNPTAA. The span at 23–41 shows a compositional bias: polar residues; the sequence is QEETNSTAEDAGQDNNPTA.

This sequence belongs to the GrpE family. Homodimer.

The protein localises to the cytoplasm. Participates actively in the response to hyperosmotic and heat shock by preventing the aggregation of stress-denatured proteins, in association with DnaK and GrpE. It is the nucleotide exchange factor for DnaK and may function as a thermosensor. Unfolded proteins bind initially to DnaJ; upon interaction with the DnaJ-bound protein, DnaK hydrolyzes its bound ATP, resulting in the formation of a stable complex. GrpE releases ADP from DnaK; ATP binding to DnaK triggers the release of the substrate protein, thus completing the reaction cycle. Several rounds of ATP-dependent interactions between DnaJ, DnaK and GrpE are required for fully efficient folding. This is Protein GrpE from Allorhizobium ampelinum (strain ATCC BAA-846 / DSM 112012 / S4) (Agrobacterium vitis (strain S4)).